Consider the following 212-residue polypeptide: Thiamine-phosphate synthase (212 aa).

4-amino-2-methyl-5-(diphosphooxymethyl)pyrimidine-binding positions include 40–44 (QFREK) and asparagine 75. Aspartate 76 and aspartate 95 together coordinate Mg(2+). Serine 113 contributes to the 4-amino-2-methyl-5-(diphosphooxymethyl)pyrimidine binding site. 139–141 (TSS) provides a ligand contact to 2-[(2R,5Z)-2-carboxy-4-methylthiazol-5(2H)-ylidene]ethyl phosphate. 4-amino-2-methyl-5-(diphosphooxymethyl)pyrimidine is bound at residue lysine 142. 2-[(2R,5Z)-2-carboxy-4-methylthiazol-5(2H)-ylidene]ethyl phosphate-binding positions include glycine 171 and 191–192 (IS).

Belongs to the thiamine-phosphate synthase family. Requires Mg(2+) as cofactor.

The enzyme catalyses 2-[(2R,5Z)-2-carboxy-4-methylthiazol-5(2H)-ylidene]ethyl phosphate + 4-amino-2-methyl-5-(diphosphooxymethyl)pyrimidine + 2 H(+) = thiamine phosphate + CO2 + diphosphate. It catalyses the reaction 2-(2-carboxy-4-methylthiazol-5-yl)ethyl phosphate + 4-amino-2-methyl-5-(diphosphooxymethyl)pyrimidine + 2 H(+) = thiamine phosphate + CO2 + diphosphate. The catalysed reaction is 4-methyl-5-(2-phosphooxyethyl)-thiazole + 4-amino-2-methyl-5-(diphosphooxymethyl)pyrimidine + H(+) = thiamine phosphate + diphosphate. It functions in the pathway cofactor biosynthesis; thiamine diphosphate biosynthesis; thiamine phosphate from 4-amino-2-methyl-5-diphosphomethylpyrimidine and 4-methyl-5-(2-phosphoethyl)-thiazole: step 1/1. Its function is as follows. Condenses 4-methyl-5-(beta-hydroxyethyl)thiazole monophosphate (THZ-P) and 2-methyl-4-amino-5-hydroxymethyl pyrimidine pyrophosphate (HMP-PP) to form thiamine monophosphate (TMP). The sequence is that of Thiamine-phosphate synthase from Staphylococcus epidermidis (strain ATCC 35984 / DSM 28319 / BCRC 17069 / CCUG 31568 / BM 3577 / RP62A).